A 502-amino-acid polypeptide reads, in one-letter code: 4,4'-diapophytoene desaturase (4,4'-diaponeurosporene-forming) (502 aa).

FAD is bound at residue V5–A17.

The protein belongs to the carotenoid/retinoid oxidoreductase family. CrtN subfamily.

It catalyses the reaction 15-cis-4,4'-diapophytoene + 3 FAD + 3 H(+) = all-trans-4,4'-diaponeurosporene + 3 FADH2. The protein operates within carotenoid biosynthesis; staphyloxanthin biosynthesis; staphyloxanthin from farnesyl diphosphate: step 2/5. Functionally, involved in the biosynthesis of the yellow-orange carotenoid staphyloxanthin, which plays a role in the virulence via its protective function against oxidative stress. Catalyzes three successive dehydrogenation reactions that lead to the introduction of three double bonds into 4,4'-diapophytoene (dehydrosqualene), with 4,4'-diapophytofluene and 4,4'-diapo-zeta-carotene as intermediates, and 4,4'-diaponeurosporene (the major deep-yellow pigment in staphylococci strains) as the end product. This chain is 4,4'-diapophytoene desaturase (4,4'-diaponeurosporene-forming), found in Staphylococcus aureus (strain USA300).